We begin with the raw amino-acid sequence, 104 residues long: MRPDHRMGPPHDEEPHMPETIDAVPEIDDLRREIDELDATIIAAIQRRTEVSKTIGKARMASGGTRLVHSREMKVIERYIDALGPEGKDLAMLLLRLGRGRLGY.

The Chorismate mutase domain maps to 23 to 104; that stretch reads AVPEIDDLRR…LRLGRGRLGY (82 aa). Arg59, Val68, and Glu72 together coordinate chorismate.

In terms of assembly, homodimer. Probably interacts with AroG (MSMEG_4244).

It is found in the cytoplasm. The enzyme catalyses chorismate = prephenate. Its pathway is metabolic intermediate biosynthesis; prephenate biosynthesis; prephenate from chorismate: step 1/1. Its activity is regulated as follows. The formation of the complex with AroG activates the chorismate mutase activity. In terms of biological role, catalyzes the Claisen rearrangement of chorismate to prephenate. Probably involved in the aromatic amino acid biosynthesis. The protein is Intracellular chorismate mutase of Mycolicibacterium smegmatis (strain ATCC 700084 / mc(2)155) (Mycobacterium smegmatis).